Reading from the N-terminus, the 214-residue chain is ATP phosphoribosyltransferase (214 aa).

This sequence belongs to the ATP phosphoribosyltransferase family. Short subfamily. Heteromultimer composed of HisG and HisZ subunits.

It localises to the cytoplasm. It carries out the reaction 1-(5-phospho-beta-D-ribosyl)-ATP + diphosphate = 5-phospho-alpha-D-ribose 1-diphosphate + ATP. It participates in amino-acid biosynthesis; L-histidine biosynthesis; L-histidine from 5-phospho-alpha-D-ribose 1-diphosphate: step 1/9. Functionally, catalyzes the condensation of ATP and 5-phosphoribose 1-diphosphate to form N'-(5'-phosphoribosyl)-ATP (PR-ATP). Has a crucial role in the pathway because the rate of histidine biosynthesis seems to be controlled primarily by regulation of HisG enzymatic activity. This Methylibium petroleiphilum (strain ATCC BAA-1232 / LMG 22953 / PM1) protein is ATP phosphoribosyltransferase.